Here is a 401-residue protein sequence, read N- to C-terminus: Bifunctional D-cysteine desulfhydrase/1-aminocyclopropane-1-carboxylate deaminase, mitochondrial (401 aa).

The N-terminal 37 residues, 1-37 (MRGRSLTLSRVKLELARRSMSATSVPSMADFLTKKPY), are a transit peptide targeting the mitochondrion. Arg-2 is modified (N-acetylserine). Lys-93 carries the N6-(pyridoxal phosphate)lysine modification. The active-site Nucleophile is the Ser-120.

This sequence belongs to the ACC deaminase/D-cysteine desulfhydrase family. Pyridoxal 5'-phosphate serves as cofactor. As to expression, highly expressed in stems and cauline leaves, and at lower levels in roots, rosette leaves and flowers.

It localises to the mitochondrion. It carries out the reaction D-cysteine + H2O = hydrogen sulfide + pyruvate + NH4(+) + H(+). The enzyme catalyses 1-aminocyclopropane-1-carboxylate + H2O = 2-oxobutanoate + NH4(+). Functionally, catalyzes the production of hydrogen sulfide (H2S) from cysteine. Is mainly responsible for the degradation of cysteine to generate H2S, a regulator of stomatal movement and closure. Has high affinity for D-cysteine. In terms of biological role, possesses 1-aminocyclopropane-1-carboxylic acid (ACC) deaminase activity. Acts as a regulator of ACC levels and causes changes in ethylene levels. The sequence is that of Bifunctional D-cysteine desulfhydrase/1-aminocyclopropane-1-carboxylate deaminase, mitochondrial (DCD) from Arabidopsis thaliana (Mouse-ear cress).